The chain runs to 137 residues: MLVPKRVKHRREFRGKMRGEAKGGKEVSFGEYGLQATTSSWITNRQIEAARIAMTRYMKRGGKVWIKIFPHKSYTAKAIGVRMGSGKGAPEGWVAPVKRGKVMFEVAGVSEEIAREALRLASHKLPVKCKFVKREAE.

The protein belongs to the universal ribosomal protein uL16 family. Part of the 50S ribosomal subunit.

Its function is as follows. Binds 23S rRNA and is also seen to make contacts with the A and possibly P site tRNAs. This Streptococcus equi subsp. zooepidemicus (strain H70) protein is Large ribosomal subunit protein uL16.